The sequence spans 300 residues: (R)-3-hydroxydecanoyl-ACP:CoA transacylase (300 aa).

Residues 29–253 (TIILVNGSLS…HTIRNAGHFI (225 aa)) form the AB hydrolase-1 domain.

It functions in the pathway polyester biosynthesis; polyhydroxyalkanoate biosynthesis. Functionally, catalyzes the transfer of the acyl moiety from in vitro synthesized 3-hydroxydecanoyl-CoA to acyl carrier protein. This is (R)-3-hydroxydecanoyl-ACP:CoA transacylase (phaG) from Pseudomonas aeruginosa (strain ATCC 15692 / DSM 22644 / CIP 104116 / JCM 14847 / LMG 12228 / 1C / PRS 101 / PAO1).